The chain runs to 293 residues: tRNA pseudouridine synthase B (293 aa).

Catalysis depends on Asp39, which acts as the Nucleophile.

Belongs to the pseudouridine synthase TruB family. Type 1 subfamily.

The catalysed reaction is uridine(55) in tRNA = pseudouridine(55) in tRNA. In terms of biological role, responsible for synthesis of pseudouridine from uracil-55 in the psi GC loop of transfer RNAs. The chain is tRNA pseudouridine synthase B from Thermobifida fusca (strain YX).